A 95-amino-acid polypeptide reads, in one-letter code: Small ribosomal subunit protein bS18 (95 aa).

Belongs to the bacterial ribosomal protein bS18 family. As to quaternary structure, part of the 30S ribosomal subunit. Forms a tight heterodimer with protein bS6.

In terms of biological role, binds as a heterodimer with protein bS6 to the central domain of the 16S rRNA, where it helps stabilize the platform of the 30S subunit. This chain is Small ribosomal subunit protein bS18, found in Rickettsia peacockii (strain Rustic).